We begin with the raw amino-acid sequence, 375 residues long: Lipid-A-disaccharide synthase (375 aa).

The protein belongs to the LpxB family.

The catalysed reaction is a lipid X + a UDP-2-N,3-O-bis[(3R)-3-hydroxyacyl]-alpha-D-glucosamine = a lipid A disaccharide + UDP + H(+). It participates in bacterial outer membrane biogenesis; LPS lipid A biosynthesis. Functionally, condensation of UDP-2,3-diacylglucosamine and 2,3-diacylglucosamine-1-phosphate to form lipid A disaccharide, a precursor of lipid A, a phosphorylated glycolipid that anchors the lipopolysaccharide to the outer membrane of the cell. The sequence is that of Lipid-A-disaccharide synthase from Pseudomonas entomophila (strain L48).